We begin with the raw amino-acid sequence, 1159 residues long: RAD51-associated protein 2 (1159 aa).

The disordered stretch occupies residues 1-35 (MSLPQPTPRMAELRKPTSSLTPPEDPDSQPPSSKR). The segment at 1111–1159 (SHFPHGISRVRPLKTCSRPIRIGLSRKARIKQLHPYLKQMCYGNLKENF) is interaction with RAD51.

As to quaternary structure, interacts with RAD51. Specifically expressed in meiotic tissues. Highly expressed in testis.

The sequence is that of RAD51-associated protein 2 (RAD51AP2) from Homo sapiens (Human).